We begin with the raw amino-acid sequence, 124 residues long: Holo-[acyl-carrier-protein] synthase (124 aa).

Residues Asp8 and Glu56 each coordinate Mg(2+).

It belongs to the P-Pant transferase superfamily. AcpS family. Requires Mg(2+) as cofactor.

The protein localises to the cytoplasm. It catalyses the reaction apo-[ACP] + CoA = holo-[ACP] + adenosine 3',5'-bisphosphate + H(+). Its function is as follows. Transfers the 4'-phosphopantetheine moiety from coenzyme A to a Ser of acyl-carrier-protein. The polypeptide is Holo-[acyl-carrier-protein] synthase (Nitratidesulfovibrio vulgaris (strain DP4) (Desulfovibrio vulgaris)).